Here is a 54-residue protein sequence, read N- to C-terminus: Large ribosomal subunit protein bL33A (54 aa).

The protein belongs to the bacterial ribosomal protein bL33 family.

The protein is Large ribosomal subunit protein bL33A (rpmG1) of Mycobacterium bovis (strain ATCC BAA-935 / AF2122/97).